A 298-amino-acid chain; its full sequence is ATP synthase gamma chain (298 aa).

Belongs to the ATPase gamma chain family. F-type ATPases have 2 components, CF(1) - the catalytic core - and CF(0) - the membrane proton channel. CF(1) has five subunits: alpha(3), beta(3), gamma(1), delta(1), epsilon(1). CF(0) has three main subunits: a, b and c.

It is found in the cell inner membrane. Its function is as follows. Produces ATP from ADP in the presence of a proton gradient across the membrane. The gamma chain is believed to be important in regulating ATPase activity and the flow of protons through the CF(0) complex. The polypeptide is ATP synthase gamma chain (Bacteroides thetaiotaomicron (strain ATCC 29148 / DSM 2079 / JCM 5827 / CCUG 10774 / NCTC 10582 / VPI-5482 / E50)).